The primary structure comprises 771 residues: ATP-dependent DNA helicase UvrD1 (771 aa).

A disordered region spans residues 1 to 21 (MSVHATDAKPPGPSPADQLLD). One can recognise a UvrD-like helicase ATP-binding domain in the interval 21-311 (DGLNPQQRQA…ILLEQNYRST (291 aa)). Residues 45–50 (GSGKTA) and Arg309 contribute to the ATP site. The 292-residue stretch at 312-603 (QNILSAANSV…TLMTLHTAKG (292 aa)) folds into the UvrD-like helicase C-terminal domain. A disordered region spans residues 691-716 (FSAPVSGAGRFGSARPSPTRSGASRR).

Belongs to the helicase family. UvrD subfamily. In terms of assembly, monomer. Mg(2+) is required as a cofactor.

It catalyses the reaction Couples ATP hydrolysis with the unwinding of duplex DNA by translocating in the 3'-5' direction.. The catalysed reaction is ATP + H2O = ADP + phosphate + H(+). Its function is as follows. DNA-dependent ATPase, acting on dsDNA with a 3'-ssDNA tail, unwinding with 3'-to 5'-polarity. Also highly efficient on nicked DNA. Involved in the post-incision events of nucleotide excision repair. This is ATP-dependent DNA helicase UvrD1 (uvrD1) from Mycobacterium bovis (strain ATCC BAA-935 / AF2122/97).